Here is a 153-residue protein sequence, read N- to C-terminus: Large ribosomal subunit protein bL9 (153 aa).

Belongs to the bacterial ribosomal protein bL9 family.

In terms of biological role, binds to the 23S rRNA. The polypeptide is Large ribosomal subunit protein bL9 (Gloeobacter violaceus (strain ATCC 29082 / PCC 7421)).